The primary structure comprises 357 residues: Protein pelota homolog (357 aa).

This sequence belongs to the eukaryotic release factor 1 family. Pelota subfamily. As to quaternary structure, monomer. Requires a divalent metal cation as cofactor.

It is found in the cytoplasm. Its function is as follows. May function in recognizing stalled ribosomes, interact with stem-loop structures in stalled mRNA molecules, and effect endonucleolytic cleavage of the mRNA. May play a role in the release non-functional ribosomes and degradation of damaged mRNAs. Has endoribonuclease activity. This is Protein pelota homolog from Methanocella arvoryzae (strain DSM 22066 / NBRC 105507 / MRE50).